The sequence spans 209 residues: Uracil phosphoribosyltransferase (209 aa).

5-phospho-alpha-D-ribose 1-diphosphate is bound by residues R79, R104, and 131-139 (DPMLATGGS). Uracil contacts are provided by residues V194 and 199–201 (GDA). Residue D200 participates in 5-phospho-alpha-D-ribose 1-diphosphate binding.

The protein belongs to the UPRTase family. Requires Mg(2+) as cofactor.

The enzyme catalyses UMP + diphosphate = 5-phospho-alpha-D-ribose 1-diphosphate + uracil. Its pathway is pyrimidine metabolism; UMP biosynthesis via salvage pathway; UMP from uracil: step 1/1. Allosterically activated by GTP. In terms of biological role, catalyzes the conversion of uracil and 5-phospho-alpha-D-ribose 1-diphosphate (PRPP) to UMP and diphosphate. The polypeptide is Uracil phosphoribosyltransferase (Bacillus cereus (strain Q1)).